A 613-amino-acid chain; its full sequence is Kelch-like protein 36 (613 aa).

The BTB domain maps to 45–112; it reads CDVVLVVEEQ…LYSSELELDG (68 aa). The BACK domain maps to 147–249; the sequence is YLYLQELASI…PEDILLQRVK (103 aa). Kelch repeat units lie at residues 294–343, 344–395, 396–442, 444–491, 492–544, and 545–593; these read CLLF…VLGG, FIFV…SIED, MLVA…IYKD, VYIS…SLGD, SIYS…VWQG, and RIYI…VCAL.

As to quaternary structure, interacts with CUL3.

The protein operates within protein modification; protein ubiquitination. In terms of biological role, probable substrate-specific adapter of an E3 ubiquitin-protein ligase complex which mediates the ubiquitination and subsequent proteasomal degradation of target proteins. This chain is Kelch-like protein 36 (Klhl36), found in Rattus norvegicus (Rat).